Here is an 82-residue protein sequence, read N- to C-terminus: ATP synthase subunit c (82 aa).

The next 2 helical transmembrane spans lie at 5-25 (IASA…IGPG) and 57-77 (LAFM…LLFA).

This sequence belongs to the ATPase C chain family. F-type ATPases have 2 components, F(1) - the catalytic core - and F(0) - the membrane proton channel. F(1) has five subunits: alpha(3), beta(3), gamma(1), delta(1), epsilon(1). F(0) has four main subunits: a(1), b(1), b'(1) and c(10-14). The alpha and beta chains form an alternating ring which encloses part of the gamma chain. F(1) is attached to F(0) by a central stalk formed by the gamma and epsilon chains, while a peripheral stalk is formed by the delta, b and b' chains.

It localises to the cellular thylakoid membrane. F(1)F(0) ATP synthase produces ATP from ADP in the presence of a proton or sodium gradient. F-type ATPases consist of two structural domains, F(1) containing the extramembraneous catalytic core and F(0) containing the membrane proton channel, linked together by a central stalk and a peripheral stalk. During catalysis, ATP synthesis in the catalytic domain of F(1) is coupled via a rotary mechanism of the central stalk subunits to proton translocation. Its function is as follows. Key component of the F(0) channel; it plays a direct role in translocation across the membrane. A homomeric c-ring of between 10-14 subunits forms the central stalk rotor element with the F(1) delta and epsilon subunits. This is ATP synthase subunit c from Cyanothece sp. (strain PCC 7425 / ATCC 29141).